A 42-amino-acid chain; its full sequence is Photosystem I reaction center subunit IX (42 aa).

Residues 7-27 (FLSTAPVLIMALLTFTAGLLI) form a helical membrane-spanning segment.

This sequence belongs to the PsaJ family.

Its subcellular location is the cellular thylakoid membrane. May help in the organization of the PsaE and PsaF subunits. This Rippkaea orientalis (strain PCC 8801 / RF-1) (Cyanothece sp. (strain PCC 8801)) protein is Photosystem I reaction center subunit IX.